The chain runs to 201 residues: Recombination protein RecR (201 aa).

The C4-type zinc finger occupies 60–75 (CTSCGNVDTSDPCTIC). In terms of domain architecture, Toprim spans 83–178 (TTLVVVEDVS…KVTRLAHGVP (96 aa)).

This sequence belongs to the RecR family.

Its function is as follows. May play a role in DNA repair. It seems to be involved in an RecBC-independent recombinational process of DNA repair. It may act with RecF and RecO. The polypeptide is Recombination protein RecR (Methylobacterium radiotolerans (strain ATCC 27329 / DSM 1819 / JCM 2831 / NBRC 15690 / NCIMB 10815 / 0-1)).